Reading from the N-terminus, the 565-residue chain is Arginine--tRNA ligase (565 aa).

Positions Ala-128–His-138 match the 'HIGH' region motif.

Belongs to the class-I aminoacyl-tRNA synthetase family. In terms of assembly, monomer.

Its subcellular location is the cytoplasm. The catalysed reaction is tRNA(Arg) + L-arginine + ATP = L-arginyl-tRNA(Arg) + AMP + diphosphate. This Delftia acidovorans (strain DSM 14801 / SPH-1) protein is Arginine--tRNA ligase.